Consider the following 235-residue polypeptide: MIKLKNVTKTYKMGEEIIYALKNVNLNIKEGEFVSIMGPSGSGKSTMLNIIGCLDKPTEGEVYIDNIKTNDLDDDELTKIRRDKIGFVFQQFNLIPLLTALENVELPLIFKYRGAMSGEERRKRALECLKMAELEERFANHKPNQLSGGQQQRVAIARALANNPPIILADEPTGALDSKTGEKIMQLLKKLNEEDGKTVVVVTHDINVARFGERIIYLKDGEVEREEKLRGFDDR.

The ABC transporter domain occupies 2–235 (IKLKNVTKTY…EEKLRGFDDR (234 aa)). 38–45 (GPSGSGKS) lines the ATP pocket.

Belongs to the ABC transporter superfamily.

This is an uncharacterized protein from Methanocaldococcus jannaschii (strain ATCC 43067 / DSM 2661 / JAL-1 / JCM 10045 / NBRC 100440) (Methanococcus jannaschii).